The following is a 169-amino-acid chain: Probable inosine/xanthosine triphosphatase (169 aa).

A substrate-binding site is contributed by 7 to 12; it reads STNKAK. Position 35 (Glu-35) interacts with Mg(2+).

This sequence belongs to the YjjX NTPase family. Homodimer. The cofactor is Mg(2+). It depends on Mn(2+) as a cofactor.

The catalysed reaction is XTP + H2O = XDP + phosphate + H(+). It catalyses the reaction ITP + H2O = IDP + phosphate + H(+). In terms of biological role, phosphatase that hydrolyzes non-canonical purine nucleotides such as XTP and ITP to their respective diphosphate derivatives. Probably excludes non-canonical purines from DNA/RNA precursor pool, thus preventing their incorporation into DNA/RNA and avoiding chromosomal lesions. This Sulfurisphaera tokodaii (strain DSM 16993 / JCM 10545 / NBRC 100140 / 7) (Sulfolobus tokodaii) protein is Probable inosine/xanthosine triphosphatase.